The sequence spans 140 residues: uncharacterized protein (140 aa).

This is an uncharacterized protein from Homo sapiens (Human).